A 298-amino-acid chain; its full sequence is Movement protein BC1 (298 aa).

Residues 253–273 (LPEASLDPGDSVSQTQSMTKK) form a disordered region.

This sequence belongs to the begomovirus movement protein BC1 family. As to quaternary structure, binds to dimeric supercoiled plasmid DNA. Post-translationally, phosphorylated.

Its subcellular location is the host cell membrane. The protein localises to the host microsome membrane. The protein resides in the host endoplasmic reticulum membrane. Transports viral genome to neighboring plant cells directly through plasmosdesmata, without any budding. The movement protein allows efficient cell to cell propagation, by bypassing the host cell wall barrier. Begomovirus genome is shuttled out of nucleus by Nuclear shuttle protein (NSP) and the movement protein transports the DNA-NSP complex to cell plasmodesmata and facilitates further movement across the cell wall. The chain is Movement protein BC1 from Hewittia sublobata (Coralbush).